The chain runs to 195 residues: uncharacterized protein (195 aa).

This is an uncharacterized protein from Bacillus subtilis (strain 168).